Here is a 342-residue protein sequence, read N- to C-terminus: 4-hydroxy-2-oxovalerate aldolase (342 aa).

The region spanning 7 to 257 is the Pyruvate carboxyltransferase domain; that stretch reads IWITEVALRD…KTGVDLYKMM (251 aa). Residue 15–16 participates in substrate binding; it reads RD. Aspartate 16 is a binding site for Mn(2+). Histidine 19 serves as the catalytic Proton acceptor. Serine 169 and histidine 196 together coordinate substrate. Residues histidine 196 and histidine 198 each contribute to the Mn(2+) site. Tyrosine 287 serves as a coordination point for substrate.

It belongs to the 4-hydroxy-2-oxovalerate aldolase family.

The enzyme catalyses (S)-4-hydroxy-2-oxopentanoate = acetaldehyde + pyruvate. The protein is 4-hydroxy-2-oxovalerate aldolase (nbaI) of Geobacillus thermodenitrificans (strain NG80-2).